Here is an 801-residue protein sequence, read N- to C-terminus: Lon protease 2 (801 aa).

The 196-residue stretch at 14-209 (LPMLPVRDIV…LVNEILAAEL (196 aa)) folds into the Lon N-terminal domain. 361–368 (GPPGVGKT) is an ATP binding site. Residues 597 to 778 (DSQVGVVQGL…DEVFAVAFDK (182 aa)) form the Lon proteolytic domain. Catalysis depends on residues Ser-684 and Lys-727. Over residues 780-791 (AKGQEKKPAAKK) the composition is skewed to basic and acidic residues. Residues 780–801 (AKGQEKKPAAKKDPKKTKSLAA) form a disordered region. The segment covering 792–801 (DPKKTKSLAA) has biased composition (basic residues).

It belongs to the peptidase S16 family. As to quaternary structure, homohexamer. Organized in a ring with a central cavity.

It localises to the cytoplasm. The catalysed reaction is Hydrolysis of proteins in presence of ATP.. Its function is as follows. ATP-dependent serine protease that mediates the selective degradation of mutant and abnormal proteins as well as certain short-lived regulatory proteins. Required for cellular homeostasis and for survival from DNA damage and developmental changes induced by stress. Degrades polypeptides processively to yield small peptide fragments that are 5 to 10 amino acids long. Binds to DNA in a double-stranded, site-specific manner. The sequence is that of Lon protease 2 from Bdellovibrio bacteriovorus (strain ATCC 15356 / DSM 50701 / NCIMB 9529 / HD100).